Here is a 283-residue protein sequence, read N- to C-terminus: MKIAKILNNNVVTVMDEQNNEQVVMGRGLGFKKRPGDTVNAALIEKIFSLRSSELTARLSDVLERIPLEVVTTADRIIALAKEKLGGNLQNSLYISLTDHCHFAIERHRQGVDIRNGLQWEVKRLYQKEFAIGLDALDIIHRRLGVRLPEDEAGFIALHLVNAQLDSHMPEVMRITRVMQEILNIVKYQLNLDYNEQAFSYHRFVTHLKFFAQRLLGRTPVFSEDESLHDVVKEKYTLAYHCAEKIQDHIMLHYDYTLTKEELMFLAIHIERVRSELQEQTAE.

PRD domains lie at 65–170 (RIPL…SHMP) and 171–280 (EVMR…LQEQ).

The protein belongs to the transcriptional antiterminator BglG family. Post-translationally, phosphorylated and inactivated by ArbF (EII-Bgl). The degree of phosphorylation is dependent on the presence or absence of beta-glucosides which act as inducers of the operon expression. Addition of inducer result in the rapid dephosphorylation of ArbG.

Functionally, mediates the positive regulation of the beta-glucoside (arb) operon by functioning as a transcriptional antiterminator. This is an RNA-binding protein that recognizes a specific sequence located just upstream of two termination sites within the operon. The polypeptide is Beta-glucoside operon antiterminator (arbG) (Dickeya chrysanthemi (Pectobacterium chrysanthemi)).